The primary structure comprises 1034 residues: Presequence protease, mitochondrial (1034 aa).

Residues 1 to 26 constitute a mitochondrion transit peptide; the sequence is MLKTRLKQSRAISRVVRRYACSHPIS. His97 lines the Zn(2+) pocket. Glu100 functions as the Proton acceptor in the catalytic mechanism. His101 contributes to the Zn(2+) binding site. Residue Glu173 is part of the active site. Residue Glu198 coordinates Zn(2+).

It belongs to the peptidase M16 family. PreP subfamily. In terms of assembly, monomer and homodimer; homodimerization is induced by binding of the substrate. The cofactor is Zn(2+).

The protein resides in the mitochondrion intermembrane space. Its subcellular location is the mitochondrion matrix. Functionally, degrades mitochondrial transit peptides after their cleavage in the intermembrane space or in the matrix, and presequence peptides; clearance of these peptides is required to keep the presequence processing machinery running. Preferentially cleaves the N-terminal side of paired basic amino acid residues. Also degrades other unstructured peptides. May function as an ATP-dependent peptidase as opposed to a metalloendopeptidase. The chain is Presequence protease, mitochondrial (CYM1) from Candida albicans (strain SC5314 / ATCC MYA-2876) (Yeast).